An 86-amino-acid chain; its full sequence is Small ribosomal subunit protein bS16 (86 aa).

This sequence belongs to the bacterial ribosomal protein bS16 family.

This Myxococcus xanthus (strain DK1622) protein is Small ribosomal subunit protein bS16.